The primary structure comprises 256 residues: ATP synthase subunit a (256 aa).

The propeptide at 1–7 is removed in mature form; that stretch reads MLNLFIT. Helical transmembrane passes span 33–53, 92–112, 122–142, 148–168, 188–208, and 209–229; these read FTTF…LNLL, YFPL…ISMI, LIFI…IGLT, FFSL…LVLI, VLSG…LMSM, and SIIT…IVVL.

Belongs to the ATPase A chain family. F-type ATPases have 2 components, CF(1) - the catalytic core - and CF(0) - the membrane proton channel. CF(1) has five subunits: alpha(3), beta(3), gamma(1), delta(1), epsilon(1). CF(0) has three main subunits: a, b and c.

It is found in the mitochondrion inner membrane. In terms of biological role, mitochondrial membrane ATP synthase (F(1)F(0) ATP synthase or Complex V) produces ATP from ADP in the presence of a proton gradient across the membrane which is generated by electron transport complexes of the respiratory chain. F-type ATPases consist of two structural domains, F(1) - containing the extramembraneous catalytic core and F(0) - containing the membrane proton channel, linked together by a central stalk and a peripheral stalk. During catalysis, ATP synthesis in the catalytic domain of F(1) is coupled via a rotary mechanism of the central stalk subunits to proton translocation. Key component of the proton channel; it may play a direct role in the translocation of protons across the membrane. In Kluyveromyces lactis (strain ATCC 8585 / CBS 2359 / DSM 70799 / NBRC 1267 / NRRL Y-1140 / WM37) (Yeast), this protein is ATP synthase subunit a (ATP6).